A 426-amino-acid chain; its full sequence is Glutamate-1-semialdehyde 2,1-aminomutase (426 aa).

K265 carries the N6-(pyridoxal phosphate)lysine modification.

Belongs to the class-III pyridoxal-phosphate-dependent aminotransferase family. HemL subfamily. As to quaternary structure, homodimer. The cofactor is pyridoxal 5'-phosphate.

It localises to the cytoplasm. It catalyses the reaction (S)-4-amino-5-oxopentanoate = 5-aminolevulinate. It participates in porphyrin-containing compound metabolism; protoporphyrin-IX biosynthesis; 5-aminolevulinate from L-glutamyl-tRNA(Glu): step 2/2. The chain is Glutamate-1-semialdehyde 2,1-aminomutase from Escherichia coli O157:H7.